We begin with the raw amino-acid sequence, 430 residues long: Lipoyl synthase, mitochondrial (430 aa).

The transit peptide at 1-37 directs the protein to the mitochondrion; that stretch reads MAASTGKLRTLFSAHSSLSARPSSALPALRLTILRSY. Low complexity predominate over residues 40 to 56; sequence TTPPDSSISDPSNSSTT. The disordered stretch occupies residues 40-63; sequence TTPPDSSISDPSNSSTTVKRPPTA. [4Fe-4S] cluster-binding residues include C141, C146, C152, C172, C176, C179, and S387. Positions 155–376 constitute a Radical SAM core domain; sequence GSSKSAATAT…KERALEMGFL (222 aa).

This sequence belongs to the radical SAM superfamily. Lipoyl synthase family. [4Fe-4S] cluster serves as cofactor.

Its subcellular location is the mitochondrion. It carries out the reaction [[Fe-S] cluster scaffold protein carrying a second [4Fe-4S](2+) cluster] + N(6)-octanoyl-L-lysyl-[protein] + 2 oxidized [2Fe-2S]-[ferredoxin] + 2 S-adenosyl-L-methionine + 4 H(+) = [[Fe-S] cluster scaffold protein] + N(6)-[(R)-dihydrolipoyl]-L-lysyl-[protein] + 4 Fe(3+) + 2 hydrogen sulfide + 2 5'-deoxyadenosine + 2 L-methionine + 2 reduced [2Fe-2S]-[ferredoxin]. Its pathway is protein modification; protein lipoylation via endogenous pathway; protein N(6)-(lipoyl)lysine from octanoyl-[acyl-carrier-protein]: step 2/2. Functionally, catalyzes the radical-mediated insertion of two sulfur atoms into the C-6 and C-8 positions of the octanoyl moiety bound to the lipoyl domains of lipoate-dependent enzymes, thereby converting the octanoylated domains into lipoylated derivatives. In Ajellomyces dermatitidis (strain ER-3 / ATCC MYA-2586) (Blastomyces dermatitidis), this protein is Lipoyl synthase, mitochondrial.